The following is a 384-amino-acid chain: Lipoprotein LprN (384 aa).

The N-terminal stretch at 1–20 is a signal peptide; the sequence is MNRIWLRAIILTASSALLAG. Residue Cys21 is the site of N-palmitoyl cysteine attachment. Cys21 carries the S-diacylglycerol cysteine lipid modification.

In terms of processing, lipidated upon expression in E.coli.

The protein resides in the cell membrane. Functionally, stimulates the host (mouse) immune response; lipidated protein produced in E.coli stimulates T-cell proliferation in mice previously sensitized with LprN. Spleenocytes from these mice produce increased amounts of TNF-alpha and IFN-gamma, as well as somewhat increased nitric oxide levels, upon subsequent challenge with LprN. Previously sensitized mice infected with M.tuberculosis have an exacerbated disease response, suggesting this lipoprotein may down-regulate the host's immune response. This Mycobacterium tuberculosis (strain ATCC 25618 / H37Rv) protein is Lipoprotein LprN (lprN).